The following is a 156-amino-acid chain: Small ribosomal subunit protein uS7 (156 aa).

The protein belongs to the universal ribosomal protein uS7 family. In terms of assembly, part of the 30S ribosomal subunit. Contacts proteins S9 and S11.

In terms of biological role, one of the primary rRNA binding proteins, it binds directly to 16S rRNA where it nucleates assembly of the head domain of the 30S subunit. Is located at the subunit interface close to the decoding center, probably blocks exit of the E-site tRNA. In Aromatoleum aromaticum (strain DSM 19018 / LMG 30748 / EbN1) (Azoarcus sp. (strain EbN1)), this protein is Small ribosomal subunit protein uS7.